The sequence spans 143 residues: Large ribosomal subunit protein uL11 (143 aa).

This sequence belongs to the universal ribosomal protein uL11 family. In terms of assembly, part of the ribosomal stalk of the 50S ribosomal subunit. Interacts with L10 and the large rRNA to form the base of the stalk. L10 forms an elongated spine to which L12 dimers bind in a sequential fashion forming a multimeric L10(L12)X complex. Post-translationally, one or more lysine residues are methylated.

Its function is as follows. Forms part of the ribosomal stalk which helps the ribosome interact with GTP-bound translation factors. The polypeptide is Large ribosomal subunit protein uL11 (Rhizobium rhizogenes (strain K84 / ATCC BAA-868) (Agrobacterium radiobacter)).